Consider the following 399-residue polypeptide: (R)-2-hydroxy-4-methylpentanoate CoA-transferase (399 aa).

The Nucleophile role is filled by D171.

Belongs to the CoA-transferase III family. Homodimer.

It catalyses the reaction 4-methylpentanoyl-CoA + (2R)-hydroxy-4-methylpentanoate = (R)-2-hydroxy-4-methylpentanoyl-CoA + 4-methylpentanoate. Its pathway is amino-acid degradation; L-leucine degradation. Its function is as follows. Involved in the reductive branch of L-leucine fermentation. Catalyzes the transfer of the CoA moiety from 4-methylpentanoyl-CoA (isocaproyl-CoA) to (R)-2-hydroxy-4-methylpentanoate ((R)-2-hydroxyisocaproate), leading to the formation of (R)-2-hydroxy-4-methylpentanoyl-CoA. Other CoA thioesters, such as acetyl-CoA or butyryl-CoA, are not accepted as substrates. This is (R)-2-hydroxy-4-methylpentanoate CoA-transferase from Clostridioides difficile (Peptoclostridium difficile).